The following is a 169-amino-acid chain: Putative tRNA (cytidine(34)-2'-O)-methyltransferase (169 aa).

S-adenosyl-L-methionine-binding residues include V79, G104, I125, and S134.

It belongs to the class IV-like SAM-binding methyltransferase superfamily. RNA methyltransferase TrmH family. TrmL subfamily.

It is found in the cytoplasm. It catalyses the reaction cytidine(34) in tRNA + S-adenosyl-L-methionine = 2'-O-methylcytidine(34) in tRNA + S-adenosyl-L-homocysteine + H(+). The catalysed reaction is 5-carboxymethylaminomethyluridine(34) in tRNA(Leu) + S-adenosyl-L-methionine = 5-carboxymethylaminomethyl-2'-O-methyluridine(34) in tRNA(Leu) + S-adenosyl-L-homocysteine + H(+). In terms of biological role, could methylate the ribose at the nucleotide 34 wobble position in tRNA. The polypeptide is Putative tRNA (cytidine(34)-2'-O)-methyltransferase (Lactococcus lactis subsp. cremoris (strain MG1363)).